We begin with the raw amino-acid sequence, 165 residues long: Small ribosomal subunit protein uS5 (165 aa).

Residues 13-76 (LEEKVLVVNR…EAARKNLITI (64 aa)) enclose the S5 DRBM domain.

The protein belongs to the universal ribosomal protein uS5 family. Part of the 30S ribosomal subunit. Contacts proteins S4 and S8.

In terms of biological role, with S4 and S12 plays an important role in translational accuracy. Its function is as follows. Located at the back of the 30S subunit body where it stabilizes the conformation of the head with respect to the body. This Chlamydia abortus (strain DSM 27085 / S26/3) (Chlamydophila abortus) protein is Small ribosomal subunit protein uS5.